The following is a 663-amino-acid chain: Cytoplasmic dynein 1 intermediate chain (663 aa).

The segment covering 17–37 (LREEKDRRRREKEIKDMEEAA) has biased composition (basic and acidic residues). Disordered regions lie at residues 17 to 52 (LREE…DQRK) and 75 to 107 (SVNS…KKQP). Low complexity predominate over residues 75–85 (SVNSMTSDNSN). The segment covering 86-99 (TQTPDASLQATVNG) has biased composition (polar residues). 7 WD repeats span residues 311–360 (SKNR…STPE), 364–404 (HCQS…RTPI), 413–454 (AHTH…QPQD), 463–503 (SKAI…SGVN), 508–553 (RHLG…PLYS), 556–596 (DNSD…EVPT), and 602–641 (AGAP…AQPS).

It belongs to the dynein intermediate chain family. In terms of assembly, homodimer. The cytoplasmic dynein 1 complex consists of two catalytic heavy chains (HCs) and a number of non-catalytic subunits presented by intermediate chains (ICs), light intermediate chains (LICs) and light chains (LCs). As to expression, high levels of isoform 1b, isoform 1c, isoform 3a and isoform 4 accumulate in early egg chambers and at stage 9 become concentrated at the posterior of the oocyte. Isoform 5a and isoform 5b are highly expressed in adult head and to a lesser extent in adult torso. Isoform 1a, isoform 2a and isoform 2b are found in all tissues examined, including ovaries, midgut, torso and head.

The protein resides in the cytoplasm. It is found in the cytoskeleton. The protein localises to the lysosome membrane. Its subcellular location is the nucleus membrane. Its function is as follows. Acts as one of several non-catalytic accessory components of the cytoplasmic dynein 1 complex that are thought to be involved in linking dynein to cargos and to adapter proteins that regulate dynein function. Cytoplasmic dynein 1 acts as a motor for the intracellular retrograde motility of vesicles and organelles along microtubules. The intermediate chains mediate the help dynein bind to dynactin 150 kDa component. The polypeptide is Cytoplasmic dynein 1 intermediate chain (sw) (Drosophila melanogaster (Fruit fly)).